The chain runs to 448 residues: tRNA(Ile)-lysidine synthase (448 aa).

ATP is bound at residue 30–35; the sequence is GGGADS.

The protein belongs to the tRNA(Ile)-lysidine synthase family.

The protein localises to the cytoplasm. It carries out the reaction cytidine(34) in tRNA(Ile2) + L-lysine + ATP = lysidine(34) in tRNA(Ile2) + AMP + diphosphate + H(+). In terms of biological role, ligates lysine onto the cytidine present at position 34 of the AUA codon-specific tRNA(Ile) that contains the anticodon CAU, in an ATP-dependent manner. Cytidine is converted to lysidine, thus changing the amino acid specificity of the tRNA from methionine to isoleucine. In Idiomarina loihiensis (strain ATCC BAA-735 / DSM 15497 / L2-TR), this protein is tRNA(Ile)-lysidine synthase.